We begin with the raw amino-acid sequence, 170 residues long: Adenine phosphoribosyltransferase (170 aa).

The protein belongs to the purine/pyrimidine phosphoribosyltransferase family. Homodimer.

The protein resides in the cytoplasm. The enzyme catalyses AMP + diphosphate = 5-phospho-alpha-D-ribose 1-diphosphate + adenine. Its pathway is purine metabolism; AMP biosynthesis via salvage pathway; AMP from adenine: step 1/1. Its function is as follows. Catalyzes a salvage reaction resulting in the formation of AMP, that is energically less costly than de novo synthesis. The protein is Adenine phosphoribosyltransferase of Thermotoga sp. (strain RQ2).